A 76-amino-acid polypeptide reads, in one-letter code: MTVIRLTRIGRKKKPFYRVVVTDSRKRRDGGWIESIGYYNPLSEPKDIKIDKERLDYWKGVGAKMSERVEKLSQKA.

Belongs to the bacterial ribosomal protein bS16 family.

This chain is Small ribosomal subunit protein bS16, found in Helicobacter acinonychis (strain Sheeba).